A 279-amino-acid polypeptide reads, in one-letter code: Diaminopimelate epimerase (279 aa).

Residues Asn11 and Asn63 each contribute to the substrate site. Cys72 serves as the catalytic Proton donor. Residues 73-74 (GN), Asn161, Asn194, and 212-213 (ER) each bind substrate. Cys221 (proton acceptor) is an active-site residue. Residue 222-223 (GT) coordinates substrate.

This sequence belongs to the diaminopimelate epimerase family. As to quaternary structure, homodimer.

The protein localises to the cytoplasm. The catalysed reaction is (2S,6S)-2,6-diaminopimelate = meso-2,6-diaminopimelate. It participates in amino-acid biosynthesis; L-lysine biosynthesis via DAP pathway; DL-2,6-diaminopimelate from LL-2,6-diaminopimelate: step 1/1. In terms of biological role, catalyzes the stereoinversion of LL-2,6-diaminopimelate (L,L-DAP) to meso-diaminopimelate (meso-DAP), a precursor of L-lysine and an essential component of the bacterial peptidoglycan. The protein is Diaminopimelate epimerase of Moorella thermoacetica (strain ATCC 39073 / JCM 9320).